Here is a 305-residue protein sequence, read N- to C-terminus: UDP-3-O-acyl-N-acetylglucosamine deacetylase (305 aa).

H79, H238, and D242 together coordinate Zn(2+). H265 serves as the catalytic Proton donor.

The protein belongs to the LpxC family. It depends on Zn(2+) as a cofactor.

The catalysed reaction is a UDP-3-O-[(3R)-3-hydroxyacyl]-N-acetyl-alpha-D-glucosamine + H2O = a UDP-3-O-[(3R)-3-hydroxyacyl]-alpha-D-glucosamine + acetate. It participates in glycolipid biosynthesis; lipid IV(A) biosynthesis; lipid IV(A) from (3R)-3-hydroxytetradecanoyl-[acyl-carrier-protein] and UDP-N-acetyl-alpha-D-glucosamine: step 2/6. In terms of biological role, catalyzes the hydrolysis of UDP-3-O-myristoyl-N-acetylglucosamine to form UDP-3-O-myristoylglucosamine and acetate, the committed step in lipid A biosynthesis. The sequence is that of UDP-3-O-acyl-N-acetylglucosamine deacetylase from Haemophilus influenzae (strain PittGG).